A 572-amino-acid polypeptide reads, in one-letter code: Methionine--tRNA ligase (572 aa).

Positions 11–21 (PYINGIKHLGN) match the 'HIGH' region motif. Zn(2+) is bound by residues Cys-143, Cys-146, Cys-156, and Cys-159. Positions 346–350 (QFSTS) match the 'KMSKS' region motif. Thr-349 is an ATP binding site.

This sequence belongs to the class-I aminoacyl-tRNA synthetase family. MetG type 1 subfamily. Monomer. Requires Zn(2+) as cofactor.

Its subcellular location is the cytoplasm. It carries out the reaction tRNA(Met) + L-methionine + ATP = L-methionyl-tRNA(Met) + AMP + diphosphate. In terms of biological role, is required not only for elongation of protein synthesis but also for the initiation of all mRNA translation through initiator tRNA(fMet) aminoacylation. This is Methionine--tRNA ligase from Ruegeria pomeroyi (strain ATCC 700808 / DSM 15171 / DSS-3) (Silicibacter pomeroyi).